A 531-amino-acid polypeptide reads, in one-letter code: Probable calcium-binding mitochondrial carrier F17E5.2 (531 aa).

EF-hand domains are found at residues 70-105 (EKEKKIRDMYDRLDADNDGSIDIRDLTQALSLQAHI), 106-135 (PASVAPKLLERMKSEHSDRVTYADFTNYVI), 136-171 (AHEARLAEVFDKIDLNSDGEVDMAEIKSYCKEMGVN), and 172-207 (LDDQKAMSIVKKMDQSGSSSVNLNEFQDFMLLYPST). 5 residues coordinate Ca(2+): aspartate 83, aspartate 85, aspartate 87, serine 89, and aspartate 94. Positions 149, 151, 153, 155, and 160 each coordinate Ca(2+). Solcar repeat units lie at residues 242–328 (GVWW…IKRW), 338–424 (LSTI…LKSM), and 435–525 (PGVL…VRKQ). The next 6 membrane-spanning stretches (helical) occupy residues 248–265 (LVAGGVAGAMSRTCTAPF), 303–322 (GNGINVIKIAPESAMKFMCY), 348–361 (SSAGAISQTAIYPM), 399–418 (GYLPNLLGIIPYAGIDLTVY), 441–458 (LACGTCSSTCGQLASYPL), and 500–517 (GITPNFMKVIPAVSISYV).

This sequence belongs to the mitochondrial carrier (TC 2.A.29) family.

The protein resides in the mitochondrion inner membrane. Functionally, calcium-dependent mitochondrial solute carrier. This chain is Probable calcium-binding mitochondrial carrier F17E5.2, found in Caenorhabditis elegans.